The primary structure comprises 442 residues: tRNA-2-methylthio-N(6)-dimethylallyladenosine synthase (442 aa).

The 118-residue stretch at 3-120 (KKLYIETHGC…LPEMIDAARI (118 aa)) folds into the MTTase N-terminal domain. [4Fe-4S] cluster-binding residues include C12, C49, C83, C157, C161, and C164. The Radical SAM core domain maps to 143–375 (RIDGPSAYVS…QHRLNQQGFE (233 aa)). In terms of domain architecture, TRAM spans 378 to 442 (RQMVGSVQRI…PHSLRGSLIQ (65 aa)).

The protein belongs to the methylthiotransferase family. MiaB subfamily. Monomer. [4Fe-4S] cluster is required as a cofactor.

It is found in the cytoplasm. It catalyses the reaction N(6)-dimethylallyladenosine(37) in tRNA + (sulfur carrier)-SH + AH2 + 2 S-adenosyl-L-methionine = 2-methylsulfanyl-N(6)-dimethylallyladenosine(37) in tRNA + (sulfur carrier)-H + 5'-deoxyadenosine + L-methionine + A + S-adenosyl-L-homocysteine + 2 H(+). In terms of biological role, catalyzes the methylthiolation of N6-(dimethylallyl)adenosine (i(6)A), leading to the formation of 2-methylthio-N6-(dimethylallyl)adenosine (ms(2)i(6)A) at position 37 in tRNAs that read codons beginning with uridine. The polypeptide is tRNA-2-methylthio-N(6)-dimethylallyladenosine synthase (Pseudomonas fluorescens (strain Pf0-1)).